A 1322-amino-acid polypeptide reads, in one-letter code: Phosphoribosylformylglycinamidine synthase (1322 aa).

Residues 307 to 318 (GASTGSGGEIRD) and Ala-678 contribute to the ATP site. The Mg(2+) site is built by Glu-718, Asn-722, and Asp-886. Residues 1069–1322 (MAILREQGVN…MFRNARVNLG (254 aa)) enclose the Glutamine amidotransferase type-1 domain. The Nucleophile role is filled by Cys-1162. Active-site residues include His-1287 and Glu-1289.

The protein in the N-terminal section; belongs to the FGAMS family. Monomer.

It is found in the cytoplasm. It catalyses the reaction N(2)-formyl-N(1)-(5-phospho-beta-D-ribosyl)glycinamide + L-glutamine + ATP + H2O = 2-formamido-N(1)-(5-O-phospho-beta-D-ribosyl)acetamidine + L-glutamate + ADP + phosphate + H(+). It participates in purine metabolism; IMP biosynthesis via de novo pathway; 5-amino-1-(5-phospho-D-ribosyl)imidazole from N(2)-formyl-N(1)-(5-phospho-D-ribosyl)glycinamide: step 1/2. Its function is as follows. Phosphoribosylformylglycinamidine synthase involved in the purines biosynthetic pathway. Catalyzes the ATP-dependent conversion of formylglycinamide ribonucleotide (FGAR) and glutamine to yield formylglycinamidine ribonucleotide (FGAM) and glutamate. This Photobacterium profundum (strain SS9) protein is Phosphoribosylformylglycinamidine synthase.